Reading from the N-terminus, the 415-residue chain is Protrudin (415 aa).

A disordered region spans residues 1–24; sequence MQTSDRDLSGPEASPSGMPEVLSE. The Cytoplasmic segment spans residues 1-66; sequence MQTSDRDLSG…AGDGVRYLLR (66 aa). The sufficient for homooligomerization stretch occupies residues 1 to 92; sequence MQTSDRDLSG…LFLTLNEGAW (92 aa). Residues 1–210 are sufficient for localization to endoplasmic reticulum tubular network and for interactions with REEP1, REEP5, ATL1, ATL2, ATL3 and SPAST; it reads MQTSDRDLSG…LYLLPLCWVL (210 aa). Positions 51 to 64 are necessary for interaction with RAB11A and function in neurite outgrowth; it reads LEPLKDAGDGVRYL. Residues 67-87 form a helical membrane-spanning segment; sequence WQMPLCSLLTCLGLNILFLTL. Position 88 (asparagine 88) is a topological domain, lumenal. A helical transmembrane segment spans residues 89–109; that stretch reads EGAWYSMGALMISVPALLGYL. The Cytoplasmic segment spans residues 110–192; sequence QEVCRGQLPE…NPVVSSQFYG (83 aa). Positions 193 to 213 form an intramembrane region, helical; it reads ALLGMVCMLYLLPLCWVLALL. Residues 214–415 are Cytoplasmic-facing; it reads NSTLFLGNGD…CASCNQTLSK (202 aa). Positions 254–290 are disordered; sequence QGAGGRGLLDSSPAPTPTEDLTPGSVEEAEEAEPDEE. The tract at residues 275-365 is necessary for interaction with KIF5A; the sequence is TPGSVEEAEE…GCAATFSVLK (91 aa). A compositionally biased stretch (acidic residues) spans 280-290; it reads EEAEEAEPDEE. A necessary for interaction with VAPA region spans residues 290–296; it reads EFKDAIE. The FYVE-type zinc-finger motif lies at 348 to 414; it reads TNNFGNCAGC…VCASCNQTLS (67 aa). Zn(2+)-binding residues include cysteine 354, cysteine 357, cysteine 370, cysteine 373, cysteine 378, cysteine 381, cysteine 406, and cysteine 409.

In terms of assembly, can form homooligomers (monomers, dimers and tetramers). Interacts with RAB11A (GDP-bound form); regulates RAB11A. Interacts with FKBP8; may negatively regulate ZFYVE27 phosphorylation. Isoform 1 interacts to a greater extent than isoform 2 with VAPB (via MSP domain). Isoform 1 interacts to a greater extent than isoform 2 with VAPA (via MSP domain). Interaction with VAPA may regulate ZFYVE27 retention in the endoplasmic reticulum and its function in cell projections formation. Interacts with ATL2, ATL3, SPAST and RTN3. Interacts with REEP1, REEP5 and ATL1. Interacts with RAB11B (GDP-bound form), SURF4, KIF5B and KIF5C. Isoform 1 and 2 interact with KIFA. Phosphorylated. Phosphorylation is induced by NGF through the MAPK/ERK pathway and modulates interaction with RAB11A. In terms of tissue distribution, astrocytes express both isoform 1 and isoform 2 and oligodendrocytes express only isoform 2 (at protein level). Isoform 1 is expressed specifically in the central nervous system and selectively in neuronal cells. Isoform 2 is expressed in cerebrum, cerebellum, spinal cord, heart, thymus, spleen, intestine and lung.

It is found in the recycling endosome membrane. Its subcellular location is the endoplasmic reticulum membrane. It localises to the cell projection. The protein localises to the growth cone membrane. Its function is as follows. Key regulator of RAB11-dependent vesicular trafficking during neurite extension through polarized membrane transport. Promotes axonal elongation and contributes to the establishment of neuronal cell polarity. Involved in nerve growth factor-induced neurite formation in VAPA-dependent manner. Contributes to both the formation and stabilization of the tubular ER network. Involved in ER morphogenesis by regulating the sheet-to-tubule balance and possibly the density of tubule interconnections. Acts as an adapter protein that facilitates the interaction of KIF5A with VAPA, VAPB, SURF4, RAB11A, RAB11B and RTN3 and the ZFYVE27-KIF5A complex contributes to the transport of these proteins in neurons. Can induce formation of neurite-like membrane protrusions in non-neuronal cells in a KIF5A/B-dependent manner. This Mus musculus (Mouse) protein is Protrudin (Zfyve27).